The following is a 527-amino-acid chain: UDP-glucuronosyltransferase 2A1 (527 aa).

An N-terminal signal peptide occupies residues 1–20 (MLNNLLLFSLQISLIGTTLG). The Lumenal segment spans residues 21–491 (GNVLIWPMEG…TWFQYHSLDV (471 aa)). N-linked (GlcNAc...) asparagine glycans are attached at residues asparagine 49, leucine 313, and asparagine 347. Residues 492–512 (IGFLLVCVTTAIFLVIQCCLF) form a helical membrane-spanning segment. Topologically, residues 513–527 (SCQKFGKIGKKKKRE) are cytoplasmic.

It belongs to the UDP-glycosyltransferase family. As to expression, olfactory epithelium, brain and fetal lung. Not present in liver.

It is found in the membrane. The protein resides in the endoplasmic reticulum membrane. The enzyme catalyses glucuronate acceptor + UDP-alpha-D-glucuronate = acceptor beta-D-glucuronoside + UDP + H(+). It catalyses the reaction 16beta,17beta-estriol + UDP-alpha-D-glucuronate = 16beta,17beta-estriol 16-O-(beta-D-glucuronate) + UDP + H(+). The catalysed reaction is 16alpha,17alpha-estriol + UDP-alpha-D-glucuronate = 16alpha,17alpha-estriol 16-O-(beta-D-glucuronate) + UDP + H(+). It carries out the reaction 17alpha-estradiol + UDP-alpha-D-glucuronate = 17alpha-estradiol 17-O-(beta-D-glucuronate) + UDP + H(+). The enzyme catalyses 17alpha-estradiol + UDP-alpha-D-glucuronate = 17alpha-estradiol 3-O-(beta-D-glucuronate) + UDP + H(+). It catalyses the reaction 17beta-estradiol + UDP-alpha-D-glucuronate = 17beta-estradiol 3-O-(beta-D-glucuronate) + UDP + H(+). The catalysed reaction is 17beta-estradiol + UDP-alpha-D-glucuronate = 17beta-estradiol 17-O-(beta-D-glucuronate) + UDP + H(+). It carries out the reaction testosterone + UDP-alpha-D-glucuronate = testosterone 17-O-(beta-D-glucuronate) + UDP + H(+). The enzyme catalyses epitestosterone + UDP-alpha-D-glucuronate = epitestosterone 17-O-(beta-D-glucuronate) + UDP + H(+). It catalyses the reaction lithocholate + UDP-alpha-D-glucuronate = lithocholoyl-3-O-(beta-D-glucuronate) + UDP + H(+). The catalysed reaction is lithocholate + UDP-alpha-D-glucuronate = lithocholoyl-24-O-(beta-D-glucuronate) + UDP. It carries out the reaction deoxycholate + UDP-alpha-D-glucuronate = deoxycholoyl-24-O-(beta-D-glucuronate) + UDP. The enzyme catalyses hyodeoxycholate + UDP-alpha-D-glucuronate = hyodeoxycholoyl-24-O-(beta-D-glucuronate) + UDP. It catalyses the reaction hyocholate + UDP-alpha-D-glucuronate = hyocholoyl-24-O-(beta-D-glucuronate) + UDP. Its function is as follows. UDP-glucuronosyltransferase (UGT) that catalyzes phase II biotransformation reactions in which lipophilic substrates are conjugated with glucuronic acid to increase the metabolite's water solubility, thereby facilitating excretion into either the urine or bile. Essential for the elimination and detoxification of drugs, xenobiotics and endogenous compounds. Catalyzes the glucuronidation of endogenous steroid hormones such as androgens (testosterone and epitestosterone) and estrogens (estradiol and epiestriol). Contributes to bile acid (BA) detoxification by catalyzing the glucuronidation of BA substrates, which are natural detergents for dietary lipids absorption. Shows a high affinity to aliphatic odorants such as citronellol as well as olfactory tissue specificity, and therefore may be involved in olfaction. Shows a potential role in detoxification of toxic waste compounds in the amniotic fluid before birth, and air-born chemical after birth. The sequence is that of UDP-glucuronosyltransferase 2A1 from Homo sapiens (Human).